The chain runs to 233 residues: Small ribosomal subunit protein uS2 (233 aa).

The protein belongs to the universal ribosomal protein uS2 family.

This is Small ribosomal subunit protein uS2 from Bacillus cytotoxicus (strain DSM 22905 / CIP 110041 / 391-98 / NVH 391-98).